Here is a 438-residue protein sequence, read N- to C-terminus: Protein kinase PINOID (438 aa).

The tract at residues 1 to 24 (MLRESDGEMSLGTTNSPISSGTES) is disordered. Residues 11 to 24 (LGTTNSPISSGTES) are compositionally biased toward polar residues. The region spanning 75 to 394 (FRLMRRIGAG…AAEVKVHPFF (320 aa)) is the Protein kinase domain. ATP-binding positions include 81–89 (IGAGDIGTV) and K109. The Proton acceptor role is filled by D205. An AGC-kinase C-terminal domain is found at 395–438 (KGLNFALIRTLTPPEIPSSVVKKPMKSATFSGRSSNKPAAFDYF).

It belongs to the protein kinase superfamily. Ser/Thr protein kinase family. Interacts with PDK1, CML12 and PBP1. Component of a complex made of PINs (e.g. PIN1 and PIN2), MAB4/MELs (e.g. NPY1/MAB4 and NPY5/MEL1) and AGC kinases (e.g. D6PK and PID) at the plasma membrane. Binds directly to PIN2, NPY1/MAB4 and NPY5/MEL1. Autophosphorylated. Phosphorylated by PDK1. Expressed in root hair cells, shoot xylem parenchyma cells and endodermis around the vasculature. Expressed in anther primordia, vasculature of the growing flower stalk, young pedicels and bracts and developing sepals, but not in petals. In pistils, transiently expressed in the vasculature of the style and the septum, and in the integuments and funiculus of the developing ovule.

It localises to the cytoplasm. It is found in the cytosol. Its subcellular location is the cell membrane. The enzyme catalyses L-seryl-[protein] + ATP = O-phospho-L-seryl-[protein] + ADP + H(+). The catalysed reaction is L-threonyl-[protein] + ATP = O-phospho-L-threonyl-[protein] + ADP + H(+). Its activity is regulated as follows. Activated by magnesium and PDK1. Inhibited by staurosporine. Repressed by calcium. In terms of biological role, serine/threonine-protein kinase involved in the regulation of auxin signaling. Acts as a positive regulator of cellular auxin efflux and regulates organ development by enhancing polar auxin transport. Phosphorylates conserved serine residues in the PIN auxin efflux carriers. Phosphorylation of PIN proteins is required and sufficient for apical-basal PIN polarity that enables directional intercellular auxin fluxes, which mediate differential growth, tissue patterning and organogenesis. Phosphorylates PIN proteins (e.g. PIN1 and PIN2), especially when NPY proteins (e.g. NPY1/MAB4 and NPY5/MEL1) are recruited at the plasma membrane; this enhances the polarized localizations (apical or basal) of PINs in the cell by limiting their lateral diffusion-based escape. Acts in association with PIN1 to control the establishment of bilateral symmetry and promotion of cotyledon outgrowth. Regulates root gravitropism through modulation of PIN2-dependent basipetal auxin transport. Required for polarization of PIN3-dependent auxin transport for hypocotyl gravitropic response. The protein kinase activity of PID is essential for its auxin efflux regulatory function. PID kinase and PP2A phosphatase activities antagonistically regulate phosphorylation of PIN proteins, affecting PIN sorting. The polypeptide is Protein kinase PINOID (Arabidopsis thaliana (Mouse-ear cress)).